The chain runs to 209 residues: Redox-sensing transcriptional repressor Rex (209 aa).

The H-T-H motif DNA-binding region spans 16 to 55 (LYYRFIQNLSLSGKQRVSSAELSEAVKVDSATIRRDFSYF). Residue 90–95 (GVGNLG) coordinates NAD(+).

This sequence belongs to the transcriptional regulatory Rex family. In terms of assembly, homodimer.

It localises to the cytoplasm. Its function is as follows. Modulates transcription in response to changes in cellular NADH/NAD(+) redox state. This chain is Redox-sensing transcriptional repressor Rex, found in Bacillus cereus (strain AH187).